The sequence spans 193 residues: D-alanyl-D-alanine dipeptidase (193 aa).

Zn(2+)-binding residues include His-98 and Asp-105. The Proton donor/acceptor role is filled by Glu-162. Residue His-165 participates in Zn(2+) binding.

It belongs to the peptidase M15D family. Zn(2+) serves as cofactor.

The protein resides in the cytoplasm. It catalyses the reaction D-alanyl-D-alanine + H2O = 2 D-alanine. Its function is as follows. Catalyzes hydrolysis of the D-alanyl-D-alanine dipeptide. May have a role in cell-wall turnover. The protein is D-alanyl-D-alanine dipeptidase of Escherichia coli (strain K12).